The following is a 473-amino-acid chain: Heavy metal-associated isoprenylated plant protein 32 (473 aa).

Positions 9 to 72 constitute an HMA domain; sequence IQTCVLKVNI…KLAKSGKHAE (64 aa). Cysteine 20 and cysteine 23 together coordinate a metal cation. 3 disordered regions span residues 96–139, 162–230, and 246–343; these read QIDH…KMGQ, KLPP…PNMT, and ANLA…QNMS. Residues 118-131 show a composition bias toward gly residues; the sequence is KNGGGGGGGGGGGN. The span at 187-217 shows a compositional bias: acidic residues; it reads PEDDDDDDFSDEFDDEFTDDDDDEFDDEFDD. A compositionally biased stretch (gly residues) spans 253-339; the sequence is AKNGGKGAPA…GFRPMGGGGP (87 aa). Cysteine 470 carries the cysteine methyl ester modification. A lipid anchor (S-farnesyl cysteine) is attached at cysteine 470. The propeptide at 471–473 is removed in mature form; it reads DIM.

This sequence belongs to the HIPP family.

In terms of biological role, heavy-metal-binding protein. The polypeptide is Heavy metal-associated isoprenylated plant protein 32 (Arabidopsis thaliana (Mouse-ear cress)).